We begin with the raw amino-acid sequence, 88 residues long: Cell division topological specificity factor (88 aa).

Belongs to the MinE family.

Prevents the cell division inhibition by proteins MinC and MinD at internal division sites while permitting inhibition at polar sites. This ensures cell division at the proper site by restricting the formation of a division septum at the midpoint of the long axis of the cell. The sequence is that of Cell division topological specificity factor from Aeromonas salmonicida (strain A449).